Reading from the N-terminus, the 276-residue chain is Protein canopy homolog 3 (276 aa).

The signal sequence occupies residues 1 to 26; that stretch reads MESMSELAPRCLLFPLLLLLPLLLLP. The Saposin B-type domain maps to 47 to 269; it reads SKCEVCKYVA…EGVQKASPLP (223 aa). 3 cysteine pairs are disulfide-bonded: cysteine 49–cysteine 206, cysteine 52–cysteine 194, and cysteine 104–cysteine 166. Asparagine 153 is a glycosylation site (N-linked (GlcNAc...) asparagine). Residues 153–179 adopt a coiled-coil conformation; that stretch reads NETSAEVADLKKQCDVLVEEFEEVIED. A disordered region spans residues 218–276; that stretch reads IASLGGKKSKKKRSGVKGSSSGSSKQRKELGGLGEDANAEEEEGVQKASPLPHSPPDEL.

The protein belongs to the canopy family. In terms of assembly, interacts with HSP90B1; this interaction is disrupted in the presence of ATP. Interacts with TLR1, TLR2, TLR4 and TLR9. Strongest interaction with TLR4.

It localises to the endoplasmic reticulum. Toll-like receptor (TLR)-specific co-chaperone for HSP90B1. Required for proper TLR folding, except that of TLR3, and hence controls TLR exit from the endoplasmic reticulum. Consequently, required for both innate and adaptive immune responses. This chain is Protein canopy homolog 3 (Cnpy3), found in Mus musculus (Mouse).